Consider the following 421-residue polypeptide: Leucine-rich repeat-containing protein 42 (421 aa).

LRR repeat units follow at residues 149–170 (VLCS…EEIK), 174–195 (ELTR…LEHL), 202–222 (SVTQ…RKMT), 234–255 (NLAL…GYLF), and 259–280 (KLNC…KDKL). Residues 376–406 (PLLSQESKKSKKRAFKESEQEQSSPQSAKQK) are disordered. The span at 396-406 (EQSSPQSAKQK) shows a compositional bias: low complexity. S399 is modified (phosphoserine).

Belongs to the LRRC42 family.

This Mus musculus (Mouse) protein is Leucine-rich repeat-containing protein 42 (Lrrc42).